The chain runs to 402 residues: CMP-sialic acid transporter 3 (402 aa).

At 1 to 42 (MSGEVECRVCHAKVQVPMAAAAVSKAYDIHRSSVSSRQRALN) the chain is on the cytoplasmic side. The chain crosses the membrane as a helical span at residues 43 to 63 (VLLVSGDCVLAGLQPILVYMC). Over 64-73 (KVDGKFKFSP) the chain is Lumenal. The helical transmembrane segment at 74 to 94 (VSVNFLTEITKIIFAIIMLCI) threads the bilayer. The Cytoplasmic segment spans residues 95-118 (QARRLKVGEKPFLTVSTFMQAARN). A helical membrane pass occupies residues 119–139 (NVLLAVPALFYAINNYMKFVM). The Lumenal segment spans residues 140–146 (QLYFNPA). A helical transmembrane segment spans residues 147-167 (TVKMLGNLKVLVIAVLLKVIM). Residues 168-170 (RRR) lie on the Cytoplasmic side of the membrane. Residues 171–191 (FSTIQWEALALLLIGISVNQL) form a helical membrane-spanning segment. The Lumenal portion of the chain corresponds to 192–202 (KSLPEGSSTLG). The chain crosses the membrane as a helical span at residues 203-223 (LPVAAGAYLYTLFFVTVPALA). The Cytoplasmic segment spans residues 224–243 (SVYNEKALKSQFDTSIYLQN). Residues 244–264 (LFLYGYGAIFNFLGLVITAII) traverse the membrane as a helical segment. At 265–280 (QGPSSFNILEGHSKAT) the chain is on the lumenal side. The helical transmembrane segment at 281–301 (MFLICNNAAQGILSSFFFKYA) threads the bilayer. The Cytoplasmic portion of the chain corresponds to 302 to 321 (DTILKKYSSTIATIFTGVAS). Residues 322–342 (AVLFGHTLTINFVLAISIVII) traverse the membrane as a helical segment. Topologically, residues 343–402 (SMHQYLSNQIKDEVPSSKIEMGDAHEHRSKESVVVNVSDSIATEAKHRHGTDERQPLLPV) are lumenal.

Belongs to the nucleotide-sugar transporter family. CMP-Sialate:CMP antiporter (TC 2.A.7.12) subfamily.

It is found in the golgi apparatus membrane. In terms of biological role, sugar transporter involved in the transport of CMP-sialic acid from the cytoplasm into the Golgi. May transport important nucleotide sugars such as CMP-Kdo (2-keto-3-deoxy-D-manno-octulosonic acid) in physiological conditions. This chain is CMP-sialic acid transporter 3, found in Oryza sativa subsp. indica (Rice).